The chain runs to 504 residues: MEFRLPSLPVFLSFLLFFLMLVRHWKRSKGQGKPPPGPKPLPILGNLHQLADGLPHYAVTKLCRKYGPVMKLKLGQLDAVVVSSPEAAKEVLKTNEIKFAQRPEVYAVEIMSYDHSSIVFSPYGDYWREMRKISVLELLSNRRVTSFRSIREDEVWNLVQFISENEGCIINLSERIFTMTNDIISRAAFGNKCDDQHNFTALLEEILQIGAGFAIADLYPSLTFLRPLTGMKPALERIHKKMDKILEEIVTEHQIKRKAAAKNNTEFEEEDLVDTLLNYAEANKNEFHLTTDQVKAVTLDIFSAGSETSATSMEWAMSELLKNPRVMKKAQEEVRQACKGKSKIREADIQNLEYLKLVIKETFRLHAPGPFTPREARETCEIGGYTIPAKAKILINLHAMGRDPTIWKDPECFQPERFEGSSIDFKGNHFELIPFGGGRRICPGISFATANIELGLAQMMYHFDFKLPNGKSLEDLDMDENFGMTCRRKENLQVIATTRIPFEK.

Residues 2 to 22 (EFRLPSLPVFLSFLLFFLMLV) traverse the membrane as a helical segment. C442 is a heme binding site.

It belongs to the cytochrome P450 family. Heme serves as cofactor. As to expression, mainly expressed in fruits and leaves.

Its subcellular location is the membrane. It catalyses the reaction dihydroniloticin + 2 reduced [NADPH--hemoprotein reductase] + 2 O2 = melianol + 2 oxidized [NADPH--hemoprotein reductase] + 3 H2O + 2 H(+). It participates in secondary metabolite biosynthesis; terpenoid biosynthesis. Functionally, monooxygenase involved in the biosynthesis of limonoids triterpene natural products such as azadirachtin, an antifeedant widely used as bioinsecticide, and possessing many medicinal applications including anti-tumoral, anti-malarial, anti-rheumatic, antibacterial, anti-inflammatory, anti-pyretic and diuretic effects. Catalyzes the conversion of dihydroniloticin to the protolimonoid melianol. This Azadirachta indica (Neem tree) protein is Melianol synthase CYP71BQ5.